Consider the following 213-residue polypeptide: Leucine-rich repeat protein 1 (213 aa).

Residues 1 to 21 (MGAGALGVVAMVAAAVVVAMA) form the signal peptide. LRR repeat units lie at residues 90–113 (DHLQ…LGNL), 115–137 (NLIS…LGKL), 138–161 (TSLV…LAGI), and 163–186 (SLKV…PFEH).

Interacts with HIR1.

It localises to the early endosome membrane. The protein resides in the late endosome membrane. Its subcellular location is the cell membrane. Its function is as follows. Involved in plant defense response. This chain is Leucine-rich repeat protein 1, found in Oryza sativa subsp. indica (Rice).